Reading from the N-terminus, the 156-residue chain is Cyanate hydratase (156 aa).

Catalysis depends on residues R96, E99, and S122.

Belongs to the cyanase family.

It catalyses the reaction cyanate + hydrogencarbonate + 3 H(+) = NH4(+) + 2 CO2. Its function is as follows. Catalyzes the reaction of cyanate with bicarbonate to produce ammonia and carbon dioxide. This chain is Cyanate hydratase, found in Escherichia coli O7:K1 (strain IAI39 / ExPEC).